A 187-amino-acid polypeptide reads, in one-letter code: ATP synthase subunit b (187 aa).

A helical transmembrane segment spans residues 32 to 52 (NILDTNLINLAIIITVLFVFG).

The protein belongs to the ATPase B chain family. F-type ATPases have 2 components, F(1) - the catalytic core - and F(0) - the membrane proton channel. F(1) has five subunits: alpha(3), beta(3), gamma(1), delta(1), epsilon(1). F(0) has four main subunits: a(1), b(1), b'(1) and c(10-14). The alpha and beta chains form an alternating ring which encloses part of the gamma chain. F(1) is attached to F(0) by a central stalk formed by the gamma and epsilon chains, while a peripheral stalk is formed by the delta, b and b' chains.

Its subcellular location is the cellular thylakoid membrane. F(1)F(0) ATP synthase produces ATP from ADP in the presence of a proton or sodium gradient. F-type ATPases consist of two structural domains, F(1) containing the extramembraneous catalytic core and F(0) containing the membrane proton channel, linked together by a central stalk and a peripheral stalk. During catalysis, ATP synthesis in the catalytic domain of F(1) is coupled via a rotary mechanism of the central stalk subunits to proton translocation. Functionally, component of the F(0) channel, it forms part of the peripheral stalk, linking F(1) to F(0). The protein is ATP synthase subunit b of Trichormus variabilis (strain ATCC 29413 / PCC 7937) (Anabaena variabilis).